Reading from the N-terminus, the 782-residue chain is Endonuclease MutS2 (782 aa).

ATP is bound at residue 336–343 (GPNTGGKT). Residues 707–782 (LDLRGYRYED…GFGVTVATLK (76 aa)) form the Smr domain.

The protein belongs to the DNA mismatch repair MutS family. MutS2 subfamily. Homodimer. Binds to stalled ribosomes, contacting rRNA.

Endonuclease that is involved in the suppression of homologous recombination and thus may have a key role in the control of bacterial genetic diversity. Its function is as follows. Acts as a ribosome collision sensor, splitting the ribosome into its 2 subunits. Detects stalled/collided 70S ribosomes which it binds and splits by an ATP-hydrolysis driven conformational change. Acts upstream of the ribosome quality control system (RQC), a ribosome-associated complex that mediates the extraction of incompletely synthesized nascent chains from stalled ribosomes and their subsequent degradation. Probably generates substrates for RQC. This is Endonuclease MutS2 from Staphylococcus aureus (strain JH1).